A 158-amino-acid chain; its full sequence is Small ribosomal subunit protein uS9 (158 aa).

Belongs to the universal ribosomal protein uS9 family.

The polypeptide is Small ribosomal subunit protein uS9 (Brucella abortus (strain S19)).